Consider the following 697-residue polypeptide: Large T antigen (697 aa).

Methionine 1 carries the post-translational modification N-acetylmethionine; by host. The 64-residue stretch at 12–75 (ELMDLLQITR…LMEIRSQCGS (64 aa)) folds into the J domain. Positions 131–135 (LFCSE) are binding to host RB1 protein and transforming activity. Serine 134 and serine 140 each carry phosphoserine; by host. The tract at residues 136–198 (TMSSSSDEDT…PKRKKTEEKK (63 aa)) is disordered. Positions 148 to 158 (AAQPPPPPAPS) are enriched in pro residues. Residues 159-169 (PEEEDEIEFVE) are compositionally biased toward acidic residues. Positions 170–183 (ETPSSCDGSSSQSS) are enriched in low complexity. Residue threonine 187 is modified to Phosphothreonine; by host. Residues 188-196 (PPKRKKTEE) carry the Nuclear localization signal motif. Positions 203–323 (PVCLYSFLSH…EENKPGVSMF (121 aa)) form a DNA-binding region, T-ag OBD. A T-ag D1-type zinc finger spans residues 330 to 422 (EQSVNWQEIC…KRLKLVECSR (93 aa)). Cysteine 367, cysteine 370, histidine 378, and histidine 382 together coordinate Zn(2+). An SF3 helicase domain is found at 463–623 (NSWDVFQNIL…AYLKQSLEKS (161 aa)). 489–496 (GPINSGKT) is a binding site for ATP.

As to quaternary structure, forms homohexamers in the presence of ATP. Interacts with host HDAC1. Interacts (via LXCXE domain) with host RB1; the interaction induces the aberrant dissociation of RB1-E2F1 complex thereby disrupting RB1's activity. Interacts (via LXCXE domain) with host pRB-related proteins RBL1 and RBL2. Interacts (via C-terminus) with host TOP1 and POLA1 allowing DNA replication. Interacts with host TP53, inhibiting TP53 binding to DNA. Interacts with host preinitiation complex components TBP, TFIIA and TFIID to regulate transcription initiation. Mg(2+) is required as a cofactor. Phosphorylated on both serine and threonine residues. Small t antigen inhibits the dephosphorylation by the AC form of PP2A. In terms of processing, O-Glycosylated near the C-terminal region. Post-translationally, acetylated by CBP in a TP53-dependent manner.

The protein localises to the host nucleus. It catalyses the reaction Couples ATP hydrolysis with the unwinding of duplex DNA by translocating in the 3'-5' direction.. The catalysed reaction is ATP + H2O = ADP + phosphate + H(+). Its function is as follows. Isoform large T antigen is a key early protein essential for both driving viral replication and inducing cellular transformation. Plays a role in viral genome replication by driving entry of quiescent cells into the cell cycle and by autoregulating the synthesis of viral early mRNA. Displays highly oncogenic activities by corrupting the host cellular checkpoint mechanisms that guard cell division and the transcription, replication, and repair of DNA. Participates in the modulation of cellular gene expression preceeding viral DNA replication. This step involves binding to host key cell cycle regulators retinoblastoma protein RB1/pRb and TP53. Induces the disassembly of host E2F1 transcription factors from RB1, thus promoting transcriptional activation of E2F1-regulated S-phase genes. Inhibits host TP53 binding to DNA, abrogating the ability of TP53 to stimulate gene expression. Plays the role of a TFIID-associated factor (TAF) in transcription initiation for all three RNA polymerases, by stabilizing the TBP-TFIIA complex on promoters. Initiates viral DNA replication and unwinding via interactions with the viral origin of replication. Binds two adjacent sites in the SV40 origin. The replication fork movement is facilitated by Large T antigen helicase activity. Has processive 3'-5' DNA helicase activity which requires a short 3' single-stranded region and ATP. Activates the transcription of viral late mRNA, through host TBP and TFIIA stabilization. Interferes with histone deacetylation mediated by HDAC1, leading to activation of transcription. This chain is Large T antigen, found in Chlorocebus aethiops (Green monkey).